The following is a 198-amino-acid chain: Ion-translocating oxidoreductase complex subunit B (198 aa).

The interval 1–28 (MIITTVYFILVAIAVLALIFGAILGFAS) is hydrophobic. A 4Fe-4S domain is found at 34 to 92 (EADPIVEKIDALLPQSQCGQCGYPGCKPYAEAIANGDDITKCIPGGQTVIVNIAELMGV). The [4Fe-4S] cluster site is built by Cys51, Cys54, Cys59, Cys75, Cys115, Cys118, Cys121, Cys125, Cys145, Cys148, Cys151, and Cys155. 4Fe-4S ferredoxin-type domains lie at 106–135 (MVAFIDEDMCIGCTKCIQACPVDAIIGTNK) and 136–165 (AMHTIIPDLCTGCELCVPPCPTDCISMIKV).

This sequence belongs to the 4Fe4S bacterial-type ferredoxin family. RnfB subfamily. As to quaternary structure, the complex is composed of six subunits: RnfA, RnfB, RnfC, RnfD, RnfE and RnfG. The cofactor is [4Fe-4S] cluster.

The protein localises to the cell inner membrane. In terms of biological role, part of a membrane-bound complex that couples electron transfer with translocation of ions across the membrane. The polypeptide is Ion-translocating oxidoreductase complex subunit B (Pasteurella multocida (strain Pm70)).